Consider the following 187-residue polypeptide: Elongation factor P (187 aa).

Belongs to the elongation factor P family.

The protein resides in the cytoplasm. It functions in the pathway protein biosynthesis; polypeptide chain elongation. Its function is as follows. Involved in peptide bond synthesis. Stimulates efficient translation and peptide-bond synthesis on native or reconstituted 70S ribosomes in vitro. Probably functions indirectly by altering the affinity of the ribosome for aminoacyl-tRNA, thus increasing their reactivity as acceptors for peptidyl transferase. This is Elongation factor P from Synechococcus sp. (strain WH7803).